Consider the following 307-residue polypeptide: METDYDVIIVGAGAAGLSAAQYACRANLRTLVIESKAHGGQALLIDSLENYPGYATPISGFEYAENMKKQAVAFGAQIAYEEVTTIGKRDSVFHITTGTGAYTAMSVILATGAEHRKMGIPGESEFLGRGVSYCATCDGPFFRNKHVVVIGGGDAACDESLVLSRLTDRVTMIHRRDTLRAQKAIAERTLKNPHIAVQWNTTLEAVRGETKVSSVLLKDVKTGETRELACDAVFFFIGMVPITGLLPDAEKDSTGYIVTDDEMRTSVEGIFAAGDVRAKSFRQVITATSDGALAAHAAASYIDTLQN.

34–41 is a binding site for FAD; the sequence is ESKAHGGQ. Cys134 and Cys137 form a disulfide bridge. 275 to 284 is a binding site for FAD; sequence DVRAKSFRQV.

Belongs to the class-II pyridine nucleotide-disulfide oxidoreductase family. Homodimer. The cofactor is FAD.

It localises to the cytoplasm. It catalyses the reaction [thioredoxin]-dithiol + NADP(+) = [thioredoxin]-disulfide + NADPH + H(+). In Treponema pallidum (strain Nichols), this protein is Thioredoxin reductase (trxB).